Here is an 81-residue protein sequence, read N- to C-terminus: EC protein I/II (81 aa).

Belongs to the metallothionein superfamily. Type 15 family.

Binds 5 molecules of zinc. May have a role in Zn(2+) homeostasis during embryogenesis. The protein is EC protein I/II of Triticum aestivum (Wheat).